Here is a 189-residue protein sequence, read N- to C-terminus: Probable nicotinate-nucleotide adenylyltransferase (189 aa).

Belongs to the NadD family.

The enzyme catalyses nicotinate beta-D-ribonucleotide + ATP + H(+) = deamido-NAD(+) + diphosphate. The protein operates within cofactor biosynthesis; NAD(+) biosynthesis; deamido-NAD(+) from nicotinate D-ribonucleotide: step 1/1. Functionally, catalyzes the reversible adenylation of nicotinate mononucleotide (NaMN) to nicotinic acid adenine dinucleotide (NaAD). In Ruegeria sp. (strain TM1040) (Silicibacter sp.), this protein is Probable nicotinate-nucleotide adenylyltransferase.